We begin with the raw amino-acid sequence, 1049 residues long: RTX-III toxin determinant A from serotype 2 (1049 aa).

The next 3 helical transmembrane spans lie at 154-170, 315-331, and 397-413; these read TIIS…LAGI, ALIA…LAFL, and LVGA…TGLI. Hemolysin-type calcium-binding repeat units follow at residues 743-760, 761-778, 779-796, 797-814, 825-842, and 843-860; these read KGSK…DDLL, NGND…NDEL, RGDN…DDKL, LGGN…NDEL, RGGK…SDLL, and DGGE…SDFY.

Belongs to the RTX prokaryotic toxin (TC 1.C.11) family. In terms of processing, palmitoylated by ApxIIIC. The toxin only becomes active when modified.

The protein localises to the secreted. The protein resides in the host cell membrane. Does not have hemolytic activity but shows a strong cytotoxicity towards alveolar macrophages and neutrophils. This is RTX-III toxin determinant A from serotype 2 (apxIIIA) from Actinobacillus pleuropneumoniae (Haemophilus pleuropneumoniae).